The primary structure comprises 468 residues: Glutamate--tRNA ligase (468 aa).

The 'HIGH' region motif lies at 10–20 (PSPTGYLHIGG). A 'KMSKS' region motif is present at residues 252–256 (KLSKR). Position 255 (Lys255) interacts with ATP.

It belongs to the class-I aminoacyl-tRNA synthetase family. Glutamate--tRNA ligase type 1 subfamily. As to quaternary structure, monomer.

Its subcellular location is the cytoplasm. It catalyses the reaction tRNA(Glu) + L-glutamate + ATP = L-glutamyl-tRNA(Glu) + AMP + diphosphate. Functionally, catalyzes the attachment of glutamate to tRNA(Glu) in a two-step reaction: glutamate is first activated by ATP to form Glu-AMP and then transferred to the acceptor end of tRNA(Glu). The chain is Glutamate--tRNA ligase from Mycoplasmopsis pulmonis (strain UAB CTIP) (Mycoplasma pulmonis).